The sequence spans 289 residues: Iodotyrosine deiodinase 1 (289 aa).

The chain crosses the membrane as a helical span at residues 1–21; it reads MFLLTPVLVAVVCILMVWIFK. Residues 100–104 and 128–129 each bind FMN; these read RRSVR and SG. Residues alanine 130, glutamate 157, tyrosine 161, and lysine 182 each contribute to the 3,5-diiodo-L-tyrosine site. Alanine 130, glutamate 157, tyrosine 161, and lysine 182 together coordinate 3-iodo-L-tyrosine. FMN-binding positions include 237–239 and arginine 279; that span reads TTT.

The protein belongs to the nitroreductase family. In terms of assembly, homodimer. The cofactor is FMN. As to expression, detected in thyroid (at protein level).

Its subcellular location is the cell membrane. The protein resides in the cytoplasmic vesicle membrane. The catalysed reaction is 2 iodide + L-tyrosine + 2 NADP(+) = 3,5-diiodo-L-tyrosine + 2 NADPH + H(+). It carries out the reaction iodide + L-tyrosine + NADP(+) = 3-iodo-L-tyrosine + NADPH. The enzyme catalyses 3-iodo-L-tyrosine + iodide + NADP(+) = 3,5-diiodo-L-tyrosine + NADPH + H(+). It catalyses the reaction L-tyrosine + chloride + NADP(+) = 3-chloro-L-tyrosine + NADPH. The catalysed reaction is bromide + L-tyrosine + NADP(+) = 3-bromo-L-tyrosine + NADPH. Functionally, catalyzes the dehalogenation of halotyrosines such as 3-bromo-L-tyrosine, 3-chloro-L-tyrosine, 3-iodo-L-tyrosine and 3,5-diiodo-L-tyrosine. During thyroid hormone biosynthesis, facilitates iodide salvage by catalysing the oxidative NADPH-dependent deiodination of the halogenated by-products of thyroid hormone production, monoiodotyrosine (L-MIT) and diiodotyrosine (L-DIT). The scavanged iodide can then reenter the hormone-producing pathways. Acts more efficiently on 3-iodo-L-tyrosine than 3,5-diiodo-L-tyrosine. This is Iodotyrosine deiodinase 1 (IYD) from Sus scrofa (Pig).